The following is a 368-amino-acid chain: MATHNIVVFGGDHCGPEVVLEAIKVLKAIETNSPSAGKFNLQNHLLGGASIDKHNDPLTDEALNAAKAADAVLLGAIGGPEWGTSSTVRPEQGLLKLRKELGTYGNLRPCNFASESLVDSSPLKAEVCRGTDFIVVRELTGGIYFGDRTEDDGSGYACDTEPYSRAEIVRIARLAGFLALAKNPPAKVWSLDKANVLATSRLWRKTVTDVISKEFPQLQLEHQLIDSAAMLLVKNPRALNGVVITSNLFGDIISDEASVIPGSIGLLPSASLGGIPDGKGKCNGIYEPIHGSAPDISGKGIVNPVGTILSVAMMLRYSLNLPKEADAVEAAVKAAIDNGTKTKDLGGNATTSDMGNAVVAELEKILKA.

79–91 (GPEWGTSSTVRPE) serves as a coordination point for NAD(+). 4 residues coordinate substrate: Arg-98, Arg-108, Arg-137, and Asp-226. The Mg(2+) site is built by Asp-226, Asp-251, and Asp-255. An NAD(+)-binding site is contributed by 291 to 303 (GSAPDISGKGIVN).

The protein belongs to the isocitrate and isopropylmalate dehydrogenases family. Homodimer. The cofactor is Mg(2+). Mn(2+) serves as cofactor.

Its subcellular location is the cytoplasm. It carries out the reaction (2R,3S)-3-isopropylmalate + NAD(+) = 4-methyl-2-oxopentanoate + CO2 + NADH. It functions in the pathway amino-acid biosynthesis; L-leucine biosynthesis; L-leucine from 3-methyl-2-oxobutanoate: step 3/4. In terms of biological role, catalyzes the oxidation of 3-carboxy-2-hydroxy-4-methylpentanoate (3-isopropylmalate) to 3-carboxy-4-methyl-2-oxopentanoate. The product decarboxylates to 4-methyl-2 oxopentanoate. In Neurospora crassa (strain ATCC 24698 / 74-OR23-1A / CBS 708.71 / DSM 1257 / FGSC 987), this protein is 3-isopropylmalate dehydrogenase (leu-1).